A 1185-amino-acid chain; its full sequence is Calmodulin-binding transcription activator homolog 1 (1185 aa).

A DNA-binding region (CG-1) is located at residues Ala72–Ile200. 2 disordered regions span residues Gly252–Ser277 and Lys390–Thr411. Over residues Ser393–Thr411 the composition is skewed to low complexity. Positions Glu418–Glu498 constitute an IPT/TIG domain. One copy of the ANK repeat lies at Asp616–Val646. The region spanning Glu957–Arg984 is the IQ domain. The disordered stretch occupies residues Cys1121–Ala1185. Positions Gln1128–Pro1147 are enriched in basic and acidic residues.

It belongs to the CAMTA family. As to quaternary structure, may interact with calmodulin. In terms of tissue distribution, expressed broadly in the nervous system.

The protein localises to the nucleus. In terms of biological role, transcription factor. Positively modulates neuronal levels of the ubiquitous Ca2+ sensor calmodulin/cmd-1, probably by direct binding to the cmd-1 promoter, thereby regulating Ca2+ signaling, physiology, and behavior. This is Calmodulin-binding transcription activator homolog 1 from Caenorhabditis elegans.